The sequence spans 412 residues: Shaggy-related protein kinase zeta (412 aa).

Positions 1–19 (MTSIPLGPPQPPSLAPQPP) are enriched in pro residues. The tract at residues 1–33 (MTSIPLGPPQPPSLAPQPPHLHGGDSLKRRPDI) is disordered. The span at 22-33 (HGGDSLKRRPDI) shows a compositional bias: basic and acidic residues. Serine 26 bears the Phosphoserine mark. The region spanning 72–356 (YMAERVVGTG…ALEACAHPFF (285 aa)) is the Protein kinase domain. ATP contacts are provided by residues 78–86 (VGTGSFGIV) and lysine 101. A Phosphoserine modification is found at serine 127. Residues threonine 136 and threonine 137 each carry the phosphothreonine modification. The active-site Proton acceptor is the aspartate 197. Serine 219 is subject to Phosphoserine. Tyrosine 232 carries the post-translational modification Phosphotyrosine. The residue at position 252 (serine 252) is a Phosphoserine. Threonine 293 bears the Phosphothreonine mark. Position 342 is a phosphoserine (serine 342). A Phosphothreonine modification is found at threonine 346.

This sequence belongs to the protein kinase superfamily. CMGC Ser/Thr protein kinase family. GSK-3 subfamily. Binds to KIB1. Interacts with beet curly top virus AL4/C4 and tomato golden mosaic virus AL4/AC4. In terms of processing, autophosphorylated mainly on threonine and serine residues.

It carries out the reaction L-seryl-[protein] + ATP = O-phospho-L-seryl-[protein] + ADP + H(+). It catalyses the reaction L-threonyl-[protein] + ATP = O-phospho-L-threonyl-[protein] + ADP + H(+). In terms of biological role, may mediate extracellular signals to regulate transcription in differentiating cells. The polypeptide is Shaggy-related protein kinase zeta (ASK6) (Arabidopsis thaliana (Mouse-ear cress)).